Consider the following 549-residue polypeptide: MKRVLTALAAALPFAAHAADAISGAVERQPTNWQAIIMFLIFVVFTLGITYWASKRVRSRSDYYTAGGNITGFQNGLAIAGDYMSAASFLGISALVFTSGYDGLIYSLGFLVGWPIILFLIAERLRNLGRYTFADVASYRLKQGPIRILSACGSLVVVALYLIAQMVGAGKLIELLFGLNYHIAVVLVGVLMMMYVLFGGMLATTWVQIIKAVLLLFGASFMAFMVMKHVGFSFNNLFTEAMAVHPKGTAIMSPGGLVQDPISALSLGLGLMFGTAGLPHILMRFFTVSDAREARKSVFYATGFMGYFYILTFIIGFGAIMLVGANPAYKDAAGALIGGNNMAAVHLANAVGGNLFLGFISAVAFATILAVVAGLTLAGASAVSHDLYANVFRKGATEREELKVSKITVLVLGVIAIILGVLFENQNIAFMVGLAFAIAASCNFPIILLSMYWSKLTTRGAMLGGWLGLLTAVVLMILGPTIWVQILGHEKAIFPYEYPALFSISVAFLGIWFFSATDNSAEGNREREQFRAQFIRSQTGFGVQQGRAH.

13 helical membrane passes run 33 to 53 (WQAI…TYWA), 77 to 97 (LAIA…ALVF), 103 to 123 (GLIY…LIAE), 148 to 168 (ILSA…QMVG), 183 to 203 (IAVV…GMLA), 206 to 226 (WVQI…AFMV), 262 to 282 (ISAL…PHIL), 303 to 323 (GFMG…IMLV), 355 to 375 (LFLG…VAGL), 404 to 424 (VSKI…VLFE), 428 to 448 (IAFM…PIIL), 464 to 484 (GGWL…TIWV), and 493 to 513 (IFPY…GIWF).

Belongs to the sodium:solute symporter (SSF) (TC 2.A.21) family.

Its subcellular location is the cell inner membrane. Functionally, transports acetate. This is Cation/acetate symporter ActP from Salmonella agona (strain SL483).